We begin with the raw amino-acid sequence, 274 residues long: Large ribosomal subunit protein uL2 (274 aa).

The disordered stretch occupies residues valine 195–lysine 274. Basic residues-rich tracts occupy residues lysine 207 to asparagine 220 and proline 244 to serine 264.

The protein belongs to the universal ribosomal protein uL2 family. As to quaternary structure, part of the 50S ribosomal subunit. Forms a bridge to the 30S subunit in the 70S ribosome.

One of the primary rRNA binding proteins. Required for association of the 30S and 50S subunits to form the 70S ribosome, for tRNA binding and peptide bond formation. It has been suggested to have peptidyltransferase activity; this is somewhat controversial. Makes several contacts with the 16S rRNA in the 70S ribosome. In Bacteroides thetaiotaomicron (strain ATCC 29148 / DSM 2079 / JCM 5827 / CCUG 10774 / NCTC 10582 / VPI-5482 / E50), this protein is Large ribosomal subunit protein uL2.